The sequence spans 283 residues: Pantothenate synthetase (283 aa).

33 to 40 (MGALHEGH) is a binding site for ATP. His-40 (proton donor) is an active-site residue. Position 64 (Gln-64) interacts with (R)-pantoate. Residue Gln-64 participates in beta-alanine binding. ATP is bound at residue 150-153 (GEKD). Gln-156 provides a ligand contact to (R)-pantoate. Residues Ile-179 and 187–190 (MSSR) each bind ATP.

It belongs to the pantothenate synthetase family. Homodimer.

The protein resides in the cytoplasm. The enzyme catalyses (R)-pantoate + beta-alanine + ATP = (R)-pantothenate + AMP + diphosphate + H(+). The protein operates within cofactor biosynthesis; (R)-pantothenate biosynthesis; (R)-pantothenate from (R)-pantoate and beta-alanine: step 1/1. Its function is as follows. Catalyzes the condensation of pantoate with beta-alanine in an ATP-dependent reaction via a pantoyl-adenylate intermediate. This is Pantothenate synthetase from Mesorhizobium japonicum (strain LMG 29417 / CECT 9101 / MAFF 303099) (Mesorhizobium loti (strain MAFF 303099)).